Consider the following 328-residue polypeptide: Tetraacyldisaccharide 4'-kinase (328 aa).

An ATP-binding site is contributed by 55–62; that stretch reads TAGGNGKT.

Belongs to the LpxK family.

It carries out the reaction a lipid A disaccharide + ATP = a lipid IVA + ADP + H(+). It functions in the pathway glycolipid biosynthesis; lipid IV(A) biosynthesis; lipid IV(A) from (3R)-3-hydroxytetradecanoyl-[acyl-carrier-protein] and UDP-N-acetyl-alpha-D-glucosamine: step 6/6. Transfers the gamma-phosphate of ATP to the 4'-position of a tetraacyldisaccharide 1-phosphate intermediate (termed DS-1-P) to form tetraacyldisaccharide 1,4'-bis-phosphate (lipid IVA). In Escherichia coli O139:H28 (strain E24377A / ETEC), this protein is Tetraacyldisaccharide 4'-kinase.